The chain runs to 300 residues: Arginine/serine-rich protein 1 (300 aa).

A disordered region spans residues M1 to Y142. S17 carries the phosphoserine modification. The segment covering S23–S36 has biased composition (low complexity). Positions S37–R104 are enriched in basic residues. Residues Y105–R115 show a composition bias toward basic and acidic residues. The segment covering R116–R125 has biased composition (low complexity). Phosphoserine occurs at positions 120 and 122. Basic residues predominate over residues S126–S141. R147 carries the omega-N-methylarginine modification. The tract at residues Q222–V300 is disordered. Basic and acidic residues predominate over residues P268–V277. Phosphoserine is present on S284.

The protein belongs to the RSRP family. Phosphorylated. Phosphorylation at Ser-120 and Ser-122 mediates the interaction with spliceosome proteins.

The protein localises to the nucleus. Functionally, probably acts as a spliceosomal factor that contributes to spliceosome assembly and regulates the isoform switching of proteins such as PARP6. The chain is Arginine/serine-rich protein 1 (Rsrp1) from Rattus norvegicus (Rat).